A 504-amino-acid chain; its full sequence is Probable cytosol aminopeptidase (504 aa).

Mn(2+) contacts are provided by Lys-268 and Asp-273. The active site involves Lys-280. Mn(2+) is bound by residues Asp-291, Asp-350, and Glu-352. Arg-354 is a catalytic residue.

The protein belongs to the peptidase M17 family. Mn(2+) is required as a cofactor.

The protein resides in the cytoplasm. The catalysed reaction is Release of an N-terminal amino acid, Xaa-|-Yaa-, in which Xaa is preferably Leu, but may be other amino acids including Pro although not Arg or Lys, and Yaa may be Pro. Amino acid amides and methyl esters are also readily hydrolyzed, but rates on arylamides are exceedingly low.. The enzyme catalyses Release of an N-terminal amino acid, preferentially leucine, but not glutamic or aspartic acids.. Presumably involved in the processing and regular turnover of intracellular proteins. Catalyzes the removal of unsubstituted N-terminal amino acids from various peptides. The sequence is that of Probable cytosol aminopeptidase from Psychromonas ingrahamii (strain DSM 17664 / CCUG 51855 / 37).